Reading from the N-terminus, the 170-residue chain is Single-stranded DNA-binding protein (170 aa).

Residues 1-26 (MSNELKQVEQTEEAVVVSETKDYIKV) form an oligomerization region.

This sequence belongs to the phi29likevirus single-strand-binding protein family. As to quaternary structure, hexamer.

In terms of biological role, single-stranded DNA-binding protein required for the elongation during viral DNA replication by strand displacement. Displaced viral DNA strands are transiently coated with the ssDNA-binding protein and therefore protected againt nucleases. The latter is then probably removed by the replisome that performs lagging strand synthesis or during the events that lead up to the recombination process. Has helix-destabilizing activity since it removes secondary structure from the ssDNA in replicative intermediates. The polypeptide is Single-stranded DNA-binding protein (Bacillus subtilis (Bacteriophage GA-1)).